Consider the following 322-residue polypeptide: TATA box-binding protein-like 2 (322 aa).

The disordered stretch occupies residues 31–54; that stretch reads PALSSTQDSTYLSGRAGPSRESGA. Positions 32–42 are enriched in polar residues; sequence ALSSTQDSTYL.

The protein belongs to the TBP family.

The protein localises to the nucleus. TATA box-binding transcription factor. Members of the TBP family are differentially required to regulate transcription and development during early embryogenesis. This Takifugu rubripes (Japanese pufferfish) protein is TATA box-binding protein-like 2.